We begin with the raw amino-acid sequence, 273 residues long: Shikimate dehydrogenase (NADP(+)) (273 aa).

Residues 14–16 (SKS) and Thr-61 each bind shikimate. The Proton acceptor role is filled by Lys-65. Positions 86 and 102 each coordinate shikimate. Residues 126 to 130 (GAGGA), 150 to 155 (NRTHAR), and Met-213 contribute to the NADP(+) site. Tyr-215 contacts shikimate. Residue Gly-237 participates in NADP(+) binding.

Belongs to the shikimate dehydrogenase family. In terms of assembly, homodimer.

The catalysed reaction is shikimate + NADP(+) = 3-dehydroshikimate + NADPH + H(+). The protein operates within metabolic intermediate biosynthesis; chorismate biosynthesis; chorismate from D-erythrose 4-phosphate and phosphoenolpyruvate: step 4/7. Its function is as follows. Involved in the biosynthesis of the chorismate, which leads to the biosynthesis of aromatic amino acids. Catalyzes the reversible NADPH linked reduction of 3-dehydroshikimate (DHSA) to yield shikimate (SA). This is Shikimate dehydrogenase (NADP(+)) from Aeromonas hydrophila subsp. hydrophila (strain ATCC 7966 / DSM 30187 / BCRC 13018 / CCUG 14551 / JCM 1027 / KCTC 2358 / NCIMB 9240 / NCTC 8049).